The primary structure comprises 242 residues: 7-cyano-7-deazaguanine synthase (242 aa).

Positions 1 to 22 are disordered; that stretch reads MNSSSNEKNKDLNRKNFSSKTD. 32–42 lines the ATP pocket; sequence LSGGLDSTTCL. Positions 212, 221, 224, and 227 each coordinate Zn(2+).

Belongs to the QueC family. It depends on Zn(2+) as a cofactor.

It catalyses the reaction 7-carboxy-7-deazaguanine + NH4(+) + ATP = 7-cyano-7-deazaguanine + ADP + phosphate + H2O + H(+). The protein operates within purine metabolism; 7-cyano-7-deazaguanine biosynthesis. Catalyzes the ATP-dependent conversion of 7-carboxy-7-deazaguanine (CDG) to 7-cyano-7-deazaguanine (preQ(0)). The sequence is that of 7-cyano-7-deazaguanine synthase from Leptospira interrogans serogroup Icterohaemorrhagiae serovar copenhageni (strain Fiocruz L1-130).